Here is a 270-residue protein sequence, read N- to C-terminus: Formamidopyrimidine-DNA glycosylase (270 aa).

Catalysis depends on Pro2, which acts as the Schiff-base intermediate with DNA. The Proton donor role is filled by Glu3. The active-site Proton donor; for beta-elimination activity is the Lys58. 3 residues coordinate DNA: His91, Arg109, and Arg151. The FPG-type zinc-finger motif lies at Leu236–Gln270. Arg260 acts as the Proton donor; for delta-elimination activity in catalysis.

The protein belongs to the FPG family. As to quaternary structure, monomer. Requires Zn(2+) as cofactor.

It catalyses the reaction Hydrolysis of DNA containing ring-opened 7-methylguanine residues, releasing 2,6-diamino-4-hydroxy-5-(N-methyl)formamidopyrimidine.. The enzyme catalyses 2'-deoxyribonucleotide-(2'-deoxyribose 5'-phosphate)-2'-deoxyribonucleotide-DNA = a 3'-end 2'-deoxyribonucleotide-(2,3-dehydro-2,3-deoxyribose 5'-phosphate)-DNA + a 5'-end 5'-phospho-2'-deoxyribonucleoside-DNA + H(+). Its function is as follows. Involved in base excision repair of DNA damaged by oxidation or by mutagenic agents. Acts as a DNA glycosylase that recognizes and removes damaged bases. Has a preference for oxidized purines, such as 7,8-dihydro-8-oxoguanine (8-oxoG). Has AP (apurinic/apyrimidinic) lyase activity and introduces nicks in the DNA strand. Cleaves the DNA backbone by beta-delta elimination to generate a single-strand break at the site of the removed base with both 3'- and 5'-phosphates. The chain is Formamidopyrimidine-DNA glycosylase from Cellvibrio japonicus (strain Ueda107) (Pseudomonas fluorescens subsp. cellulosa).